The following is a 479-amino-acid chain: Ribosomal RNA small subunit methyltransferase F (479 aa).

S-adenosyl-L-methionine contacts are provided by residues 125–131, E149, D176, and D194; that span reads AAAPGSK. The active-site Nucleophile is C247.

Belongs to the class I-like SAM-binding methyltransferase superfamily. RsmB/NOP family.

The protein localises to the cytoplasm. It carries out the reaction cytidine(1407) in 16S rRNA + S-adenosyl-L-methionine = 5-methylcytidine(1407) in 16S rRNA + S-adenosyl-L-homocysteine + H(+). In terms of biological role, specifically methylates the cytosine at position 1407 (m5C1407) of 16S rRNA. This chain is Ribosomal RNA small subunit methyltransferase F, found in Salmonella paratyphi C (strain RKS4594).